We begin with the raw amino-acid sequence, 156 residues long: 3-hydroxyacyl-[acyl-carrier-protein] dehydratase FabZ (156 aa).

H57 is an active-site residue.

Belongs to the thioester dehydratase family. FabZ subfamily.

It localises to the cytoplasm. The enzyme catalyses a (3R)-hydroxyacyl-[ACP] = a (2E)-enoyl-[ACP] + H2O. Involved in unsaturated fatty acids biosynthesis. Catalyzes the dehydration of short chain beta-hydroxyacyl-ACPs and long chain saturated and unsaturated beta-hydroxyacyl-ACPs. The protein is 3-hydroxyacyl-[acyl-carrier-protein] dehydratase FabZ of Anaeromyxobacter dehalogenans (strain 2CP-1 / ATCC BAA-258).